We begin with the raw amino-acid sequence, 447 residues long: Tubulin beta-2 chain (447 aa).

The GTP site is built by Gln11, Glu69, Ser138, Gly142, Thr143, Gly144, Asn204, and Asn226. Glu69 lines the Mg(2+) pocket. The tract at residues 426–447 (QDAGVDEEEEEYEDDAPLEEEV) is disordered. The segment covering 429–447 (GVDEEEEEYEDDAPLEEEV) has biased composition (acidic residues).

This sequence belongs to the tubulin family. As to quaternary structure, dimer of alpha and beta chains. A typical microtubule is a hollow water-filled tube with an outer diameter of 25 nm and an inner diameter of 15 nM. Alpha-beta heterodimers associate head-to-tail to form protofilaments running lengthwise along the microtubule wall with the beta-tubulin subunit facing the microtubule plus end conferring a structural polarity. Microtubules usually have 13 protofilaments but different protofilament numbers can be found in some organisms and specialized cells. Requires Mg(2+) as cofactor.

Its subcellular location is the cytoplasm. The protein localises to the cytoskeleton. Functionally, tubulin is the major constituent of microtubules, a cylinder consisting of laterally associated linear protofilaments composed of alpha- and beta-tubulin heterodimers. Microtubules grow by the addition of GTP-tubulin dimers to the microtubule end, where a stabilizing cap forms. Below the cap, tubulin dimers are in GDP-bound state, owing to GTPase activity of alpha-tubulin. The polypeptide is Tubulin beta-2 chain (TUB2) (Colletotrichum graminicola (Maize anthracnose fungus)).